The chain runs to 399 residues: La protein 2 (399 aa).

The region spanning 3–106 (SSFNEETAKK…GRGTKLSKPE (104 aa)) is the HTH La-type RNA-binding domain. An RRM domain is found at 115–192 (RTLAASPFEY…ADLVLIPKSD (78 aa)). A xRRM domain is found at 269–399 (SLCKDNTDQL…QPTKKARKEP (131 aa)). Residues 367-399 (AELEGGKEGHKKEKGKDECFENVQPTKKARKEP) are disordered. Positions 370 to 385 (EGGKEGHKKEKGKDEC) are enriched in basic and acidic residues.

In terms of tissue distribution, expressed ubiquitously (at protein level).

The protein resides in the nucleus. It is found in the nucleoplasm. It localises to the nucleolus. In terms of biological role, binds to the 3' poly(U) terminus of nascent RNA polymerase III transcripts, protecting them from exonuclease digestion and facilitating their folding and maturation. The protein is La protein 2 (LA2) of Arabidopsis thaliana (Mouse-ear cress).